Consider the following 52-residue polypeptide: Rubredoxin (52 aa).

In terms of domain architecture, Rubredoxin-like spans 1–51 (MDKYECSICGYIYDEAEGDDGNVAAGTKFADLPADWVCPTCGADKDAFVKM). Residues cysteine 6, cysteine 9, cysteine 38, and cysteine 41 each contribute to the Fe cation site.

Belongs to the rubredoxin family. Fe(3+) is required as a cofactor.

Its function is as follows. Rubredoxin is a small nonheme, iron protein lacking acid-labile sulfide. Its single Fe, chelated to 4 Cys, functions as an electron acceptor and may also stabilize the conformation of the molecule. This Megasphaera elsdenii protein is Rubredoxin.